A 334-amino-acid chain; its full sequence is Protein-methionine-sulfoxide reductase catalytic subunit MsrP (334 aa).

Residues 1 to 44 (MKKNQFLKESDVTAESVFFMKRRQVLKALGISAAALSLPHAAHA) constitute a signal peptide (tat-type signal). Mo-molybdopterin is bound by residues Asn88, 91–92 (YE), Cys146, Thr181, Asn233, Arg238, and 249–251 (GIK).

The protein belongs to the MsrP family. In terms of assembly, heterodimer of a catalytic subunit (MsrP) and a heme-binding subunit (MsrQ). Mo-molybdopterin serves as cofactor. Post-translationally, predicted to be exported by the Tat system. The position of the signal peptide cleavage has not been experimentally proven.

It localises to the periplasm. The enzyme catalyses L-methionyl-[protein] + a quinone + H2O = L-methionyl-(S)-S-oxide-[protein] + a quinol. It carries out the reaction L-methionyl-[protein] + a quinone + H2O = L-methionyl-(R)-S-oxide-[protein] + a quinol. In terms of biological role, part of the MsrPQ system that repairs oxidized periplasmic proteins containing methionine sulfoxide residues (Met-O), using respiratory chain electrons. Thus protects these proteins from oxidative-stress damage caused by reactive species of oxygen and chlorine generated by the host defense mechanisms. MsrPQ is essential for the maintenance of envelope integrity under bleach stress, rescuing a wide series of structurally unrelated periplasmic proteins from methionine oxidation, including the primary periplasmic chaperone SurA and the lipoprotein Pal. The catalytic subunit MsrP is non-stereospecific, being able to reduce both (R-) and (S-) diastereoisomers of methionine sulfoxide. The chain is Protein-methionine-sulfoxide reductase catalytic subunit MsrP from Escherichia coli O81 (strain ED1a).